Reading from the N-terminus, the 346-residue chain is Ephrin-B1 (346 aa).

A signal peptide spans 1–27; it reads MARPGQRWLGKWLVAMVVWALCRLATP. Topologically, residues 28–237 are extracellular; the sequence is LAKNLEPVSW…GDPDGFFNSK (210 aa). The Ephrin RBD domain maps to 30 to 164; that stretch reads KNLEPVSWSS…TRTMKIIMKV (135 aa). 2 disulfide bridges follow: Cys-64–Cys-101 and Cys-89–Cys-153. N-linked (GlcNAc...) asparagine glycosylation occurs at Asn-139. The segment at 169-228 is disordered; sequence NAVTPEQLTTSRPSKEADNTVKMATQAPGSRGSLGDSDGKHETVNQEEKSGPGASGGSSG. Over residues 205–218 the composition is skewed to basic and acidic residues; that stretch reads SDGKHETVNQEEKS. A helical transmembrane segment spans residues 238-258; sequence VALFAAVGAGCVIFLLIIIFL. At 259–346 the chain is on the cytoplasmic side; the sequence is TVLLLKLRKR…QSPANIYYKV (88 aa). Residues 260-273 carry the Nuclear localization signal motif; that stretch reads VLLLKLRKRHRKHT. The interval 263-294 is interaction with ZHX2; the sequence is LKLRKRHRKHTQQRAAALSLSTLASPKGGSGT. Phosphoserine occurs at positions 281 and 287. Positions 344–346 match the PDZ-binding motif; it reads YKV.

Belongs to the ephrin family. In terms of assembly, interacts (via PDZ-binding motif) with GRIP1 and GRIP2 (via PDZ domain 6). Interacts with TLE1. The intracellular domain peptide interacts with ZHX2; the interaction enhances ZHX2 transcriptional repression activity. In terms of processing, inducible phosphorylation of tyrosine residues in the cytoplasmic domain. Post-translationally, proteolytically processed. The ectodomain is cleaved, probably by a metalloprotease, to produce a membrane-tethered C-terminal fragment. This fragment is then further processed by the gamma-secretase complex to yield a soluble intracellular domain peptide which can translocate to the nucleus. The intracellular domain peptide is highly labile suggesting that it is targeted for degradation by the proteasome. Widely expressed. Detected in both neuronal and non-neuronal tissues. Seems to have particularly strong expression in retina, sciatic nerve, heart and spinal cord.

It localises to the cell membrane. It is found in the membrane raft. The protein resides in the nucleus. Functionally, cell surface transmembrane ligand for Eph receptors, a family of receptor tyrosine kinases which are crucial for migration, repulsion and adhesion during neuronal, vascular and epithelial development. Binding to Eph receptors residing on adjacent cells leads to contact-dependent bidirectional signaling into neighboring cells. Shows high affinity for the receptor tyrosine kinase EPHB1/ELK. Can also bind EPHB2 and EPHB3. Binds to, and induces collapse of, commissural axons/growth cones in vitro. May play a role in constraining the orientation of longitudinally projecting axons. In Homo sapiens (Human), this protein is Ephrin-B1 (EFNB1).